A 934-amino-acid chain; its full sequence is Glycine dehydrogenase (decarboxylating) (934 aa).

K687 is modified (N6-(pyridoxal phosphate)lysine).

Belongs to the GcvP family. In terms of assembly, the glycine cleavage system is composed of four proteins: P, T, L and H. Pyridoxal 5'-phosphate is required as a cofactor.

The enzyme catalyses N(6)-[(R)-lipoyl]-L-lysyl-[glycine-cleavage complex H protein] + glycine + H(+) = N(6)-[(R)-S(8)-aminomethyldihydrolipoyl]-L-lysyl-[glycine-cleavage complex H protein] + CO2. Functionally, the glycine cleavage system catalyzes the degradation of glycine. The P protein binds the alpha-amino group of glycine through its pyridoxal phosphate cofactor; CO(2) is released and the remaining methylamine moiety is then transferred to the lipoamide cofactor of the H protein. In Nocardia farcinica (strain IFM 10152), this protein is Glycine dehydrogenase (decarboxylating).